A 301-amino-acid polypeptide reads, in one-letter code: Ribosomal RNA small subunit methyltransferase A (301 aa).

S-adenosyl-L-methionine is bound by residues Asn18, Leu20, Gly45, Glu66, Asp91, and Asn112. Positions 267–301 are disordered; sequence PPEAAPVKEKRRMAKNKMTEPANNNLNENSAPEVD. Over residues 287–301 the composition is skewed to polar residues; it reads PANNNLNENSAPEVD.

The protein belongs to the class I-like SAM-binding methyltransferase superfamily. rRNA adenine N(6)-methyltransferase family. RsmA subfamily.

The protein resides in the cytoplasm. The catalysed reaction is adenosine(1518)/adenosine(1519) in 16S rRNA + 4 S-adenosyl-L-methionine = N(6)-dimethyladenosine(1518)/N(6)-dimethyladenosine(1519) in 16S rRNA + 4 S-adenosyl-L-homocysteine + 4 H(+). Functionally, specifically dimethylates two adjacent adenosines (A1518 and A1519) in the loop of a conserved hairpin near the 3'-end of 16S rRNA in the 30S particle. May play a critical role in biogenesis of 30S subunits. The protein is Ribosomal RNA small subunit methyltransferase A of Colwellia psychrerythraea (strain 34H / ATCC BAA-681) (Vibrio psychroerythus).